We begin with the raw amino-acid sequence, 389 residues long: Large ribosomal subunit protein uL3 (389 aa).

Residues Met-1–Asp-36 are disordered. Residues Pro-18–Ser-31 are compositionally biased toward basic residues.

The protein belongs to the universal ribosomal protein uL3 family.

Its subcellular location is the cytoplasm. Functionally, the L3 protein is a component of the large subunit of cytoplasmic ribosomes. The protein is Large ribosomal subunit protein uL3 (RPL3) of Oryza sativa subsp. japonica (Rice).